We begin with the raw amino-acid sequence, 278 residues long: Pantothenate synthetase (278 aa).

ATP is bound at residue 26–33; that stretch reads MGNLHEGH. The Proton donor role is filled by histidine 33. Glutamine 57 lines the (R)-pantoate pocket. Glutamine 57 contacts beta-alanine. 144–147 is a binding site for ATP; it reads GKKD. Glutamine 150 is a binding site for (R)-pantoate. Residues glycine 173 and 181-184 each bind ATP; that span reads LSSR.

Belongs to the pantothenate synthetase family. In terms of assembly, homodimer.

Its subcellular location is the cytoplasm. The catalysed reaction is (R)-pantoate + beta-alanine + ATP = (R)-pantothenate + AMP + diphosphate + H(+). The protein operates within cofactor biosynthesis; (R)-pantothenate biosynthesis; (R)-pantothenate from (R)-pantoate and beta-alanine: step 1/1. Catalyzes the condensation of pantoate with beta-alanine in an ATP-dependent reaction via a pantoyl-adenylate intermediate. This chain is Pantothenate synthetase, found in Neisseria meningitidis serogroup A / serotype 4A (strain DSM 15465 / Z2491).